Here is a 230-residue protein sequence, read N- to C-terminus: Calcyclin-binding protein (230 aa).

The tract at residues 1 to 82 is interaction with SIAH1; that stretch reads MSSALEELQK…YTVKISNYGW (82 aa). Position 3 is a phosphoserine (Ser3). Lys10 and Lys21 each carry N6-acetyllysine. Phosphoserine is present on Ser36. The disordered stretch occupies residues 38 to 59; the sequence is IETEMKNKMQQKSQRKAELTEN. A CS domain is found at 75–169; the sequence is VKISNYGWDQ…AENTRWDYLT (95 aa). The interaction with SKP1 stretch occupies residues 75 to 230; the sequence is VKISNYGWDQ…EKQAKGDTDF (156 aa). An N6-acetyllysine mark is found at Lys87 and Lys120. The interaction with S100A6 stretch occupies residues 156 to 230; the sequence is CRKKAENTRW…EKQAKGDTDF (75 aa). In terms of domain architecture, SGS spans 170–230; that stretch reads QVEKECKEKE…EKQAKGDTDF (61 aa).

Monomer or homodimer. Component of some large E3 complex at least composed of UBE2D1, SIAH1, CACYBP/SIP, SKP1, APC and TBL1X. Interacts directly with SIAH1, SIAH2 and SKP1. Interacts with proteins of the S100 family S100A1, S100A6, S100B, S100P and S100A12 in a calcium-dependent manner. Post-translationally, phosphorylated on serine residues. Phosphorylated upon induction by RA or at high calcium concentrations.

The protein localises to the nucleus. It is found in the cytoplasm. Its function is as follows. May be involved in calcium-dependent ubiquitination and subsequent proteasomal degradation of target proteins. Probably serves as a molecular bridge in ubiquitin E3 complexes. Participates in the ubiquitin-mediated degradation of beta-catenin (CTNNB1). The sequence is that of Calcyclin-binding protein (CACYBP) from Bos taurus (Bovine).